The following is a 322-amino-acid chain: Acetyl-coenzyme A carboxylase carboxyl transferase subunit alpha (322 aa).

The region spanning 30–293 is the CoA carboxyltransferase C-terminal domain; sequence AVDISAEILR…KKALQDSLKL (264 aa).

It belongs to the AccA family. In terms of assembly, acetyl-CoA carboxylase is a heterohexamer composed of biotin carboxyl carrier protein (AccB), biotin carboxylase (AccC) and two subunits each of ACCase subunit alpha (AccA) and ACCase subunit beta (AccD).

Its subcellular location is the cytoplasm. It catalyses the reaction N(6)-carboxybiotinyl-L-lysyl-[protein] + acetyl-CoA = N(6)-biotinyl-L-lysyl-[protein] + malonyl-CoA. It participates in lipid metabolism; malonyl-CoA biosynthesis; malonyl-CoA from acetyl-CoA: step 1/1. Component of the acetyl coenzyme A carboxylase (ACC) complex. First, biotin carboxylase catalyzes the carboxylation of biotin on its carrier protein (BCCP) and then the CO(2) group is transferred by the carboxyltransferase to acetyl-CoA to form malonyl-CoA. The polypeptide is Acetyl-coenzyme A carboxylase carboxyl transferase subunit alpha (Nitrosospira multiformis (strain ATCC 25196 / NCIMB 11849 / C 71)).